Consider the following 402-residue polypeptide: Transcription regulatory protein OpdE (402 aa).

Transmembrane regions (helical) follow at residues 22-42 (VLAI…PVSL), 60-80 (GIAI…SVAG), 86-106 (TLLL…ALAP), 108-128 (YFVY…FWSM), 147-167 (ALVN…GAWL), 170-190 (LIGW…ALAW), 220-240 (PGVM…FSLF), 256-276 (AHVS…TLLI), 296-316 (ALIA…VVLL), 318-338 (LWGL…ARVF), 348-368 (LFVA…GLLF), and 375-395 (ATFF…ILTA).

The protein to B.subtilis YwfA.

It is found in the cell membrane. In terms of biological role, regulates the expression of oprD which encodes the imipenem-specific porin. This is Transcription regulatory protein OpdE (opdE) from Pseudomonas aeruginosa (strain ATCC 15692 / DSM 22644 / CIP 104116 / JCM 14847 / LMG 12228 / 1C / PRS 101 / PAO1).